We begin with the raw amino-acid sequence, 29 residues long: Cytochrome b6-f complex subunit 8 (29 aa).

Residues 3 to 23 form a helical membrane-spanning segment; it reads ILTLGWVSILALFTWSIAMVV.

Belongs to the PetN family. As to quaternary structure, the 4 large subunits of the cytochrome b6-f complex are cytochrome b6, subunit IV (17 kDa polypeptide, PetD), cytochrome f and the Rieske protein, while the 4 small subunits are PetG, PetL, PetM and PetN. The complex functions as a dimer.

The protein localises to the cellular thylakoid membrane. Functionally, component of the cytochrome b6-f complex, which mediates electron transfer between photosystem II (PSII) and photosystem I (PSI), cyclic electron flow around PSI, and state transitions. The chain is Cytochrome b6-f complex subunit 8 from Microcystis aeruginosa (strain NIES-843 / IAM M-2473).